A 78-amino-acid chain; its full sequence is Acyl carrier protein (78 aa).

Positions 2–77 (STIEERVKKI…EAIDYVTAHA (76 aa)) constitute a Carrier domain. Position 37 is an O-(pantetheine 4'-phosphoryl)serine (serine 37).

The protein belongs to the acyl carrier protein (ACP) family. 4'-phosphopantetheine is transferred from CoA to a specific serine of apo-ACP by AcpS. This modification is essential for activity because fatty acids are bound in thioester linkage to the sulfhydryl of the prosthetic group.

The protein resides in the cytoplasm. Its pathway is lipid metabolism; fatty acid biosynthesis. Functionally, carrier of the growing fatty acid chain in fatty acid biosynthesis. The chain is Acyl carrier protein from Ectopseudomonas mendocina (strain ymp) (Pseudomonas mendocina).